Here is a 236-residue protein sequence, read N- to C-terminus: Methylosome subunit pICln (236 aa).

Residues 1 to 20 (MSFLKSFPPPGPTEGLRHQQ) form a disordered region. Ser2 carries the post-translational modification N-acetylserine. Ser101, Ser143, Ser192, Ser194, Ser197, and Ser209 each carry phosphoserine. Thr222 bears the Phosphothreonine mark.

This sequence belongs to the pICln (TC 1.A.47) family. In terms of assembly, component of the methylosome, a 20S complex containing at least PRMT5/SKB1, WDR77/MEP50 and CLNS1A/pICln. May mediate SNRPD1 and SNRPD3 methylation. Forms a 6S pICln-Sm complex composed of CLNS1A/pICln, SNRPD1, SNRPD2, SNRPE, SNRPF and SNRPG; ring-like structure where CLNS1A/pICln mimics additional Sm proteins and which is unable to assemble into the core snRNP. Interacts with LSM10 and LSM11. Widely distributed but expressed more abundantly in nonpigmented ciliary epithelial cells than in pigmented ones.

It localises to the cytoplasm. The protein resides in the cytosol. It is found in the nucleus. The protein localises to the cytoskeleton. Involved in both the assembly of spliceosomal snRNPs and the methylation of Sm proteins. Chaperone that regulates the assembly of spliceosomal U1, U2, U4 and U5 small nuclear ribonucleoproteins (snRNPs), the building blocks of the spliceosome, and thereby plays an important role in the splicing of cellular pre-mRNAs. Most spliceosomal snRNPs contain a common set of Sm proteins SNRPB, SNRPD1, SNRPD2, SNRPD3, SNRPE, SNRPF and SNRPG that assemble in a heptameric protein ring on the Sm site of the small nuclear RNA to form the core snRNP (Sm core). In the cytosol, the Sm proteins SNRPD1, SNRPD2, SNRPE, SNRPF and SNRPG are trapped in an inactive 6S pICln-Sm complex by the chaperone CLNS1A that controls the assembly of the core snRNP. Dissociation by the SMN complex of CLNS1A from the trapped Sm proteins and their transfer to an SMN-Sm complex triggers the assembly of core snRNPs and their transport to the nucleus. The sequence is that of Methylosome subunit pICln (CLNS1A) from Oryctolagus cuniculus (Rabbit).